We begin with the raw amino-acid sequence, 387 residues long: 3-ketoacyl-CoA thiolase (387 aa).

The Acyl-thioester intermediate role is filled by C91. Residues H343 and C373 each act as proton acceptor in the active site.

This sequence belongs to the thiolase-like superfamily. Thiolase family. As to quaternary structure, heterotetramer of two alpha chains (FadB) and two beta chains (FadA).

The protein resides in the cytoplasm. It carries out the reaction an acyl-CoA + acetyl-CoA = a 3-oxoacyl-CoA + CoA. Its pathway is lipid metabolism; fatty acid beta-oxidation. Functionally, catalyzes the final step of fatty acid oxidation in which acetyl-CoA is released and the CoA ester of a fatty acid two carbons shorter is formed. This Shewanella frigidimarina (strain NCIMB 400) protein is 3-ketoacyl-CoA thiolase.